The primary structure comprises 471 residues: Putative metabolite transport protein YncC (471 aa).

Transmembrane regions (helical) follow at residues 13–33 (LIMI…GVIN), 50–70 (VTEG…ALLC), 88–108 (FLFF…IMAV), 111–131 (FLLG…LAEM), 146–166 (LMIV…GVTM), 175–195 (YMLV…LKVP), 256–276 (LLWI…NSIM), 295–315 (IANI…IWLV), 323–343 (ILLI…IFSI), 358–378 (LTVL…WLVI), 393–413 (ISVF…PILL), and 416–436 (VGLS…IGFV).

This sequence belongs to the major facilitator superfamily. Sugar transporter (TC 2.A.1.1) family.

The protein resides in the cell membrane. This Bacillus subtilis (strain 168) protein is Putative metabolite transport protein YncC (yncC).